A 643-amino-acid polypeptide reads, in one-letter code: 1-deoxy-D-xylulose-5-phosphate synthase (643 aa).

Thiamine diphosphate contacts are provided by residues histidine 78 and 119–121; that span reads AHS. A Mg(2+)-binding site is contributed by aspartate 150. Thiamine diphosphate-binding positions include 151-152, asparagine 179, tyrosine 288, and glutamate 370; that span reads GS. Asparagine 179 serves as a coordination point for Mg(2+).

It belongs to the transketolase family. DXPS subfamily. Homodimer. Mg(2+) serves as cofactor. Thiamine diphosphate is required as a cofactor.

It catalyses the reaction D-glyceraldehyde 3-phosphate + pyruvate + H(+) = 1-deoxy-D-xylulose 5-phosphate + CO2. The protein operates within metabolic intermediate biosynthesis; 1-deoxy-D-xylulose 5-phosphate biosynthesis; 1-deoxy-D-xylulose 5-phosphate from D-glyceraldehyde 3-phosphate and pyruvate: step 1/1. Functionally, catalyzes the acyloin condensation reaction between C atoms 2 and 3 of pyruvate and glyceraldehyde 3-phosphate to yield 1-deoxy-D-xylulose-5-phosphate (DXP). This is 1-deoxy-D-xylulose-5-phosphate synthase from Brucella abortus (strain S19).